The sequence spans 155 residues: Ribosome maturation factor RimP (155 aa).

It belongs to the RimP family.

It localises to the cytoplasm. In terms of biological role, required for maturation of 30S ribosomal subunits. This is Ribosome maturation factor RimP from Prochlorococcus marinus (strain MIT 9515).